The primary structure comprises 252 residues: Phosphate import ATP-binding protein PstB 1 (252 aa).

The region spanning 6-247 (LQIRDLSVYY…PKRKETEDYI (242 aa)) is the ABC transporter domain. 38–45 (GPSGSGKS) provides a ligand contact to ATP.

Belongs to the ABC transporter superfamily. Phosphate importer (TC 3.A.1.7) family. The complex is composed of two ATP-binding proteins (PstB), two transmembrane proteins (PstC and PstA) and a solute-binding protein (PstS).

The protein resides in the cell membrane. The catalysed reaction is phosphate(out) + ATP + H2O = ADP + 2 phosphate(in) + H(+). Functionally, part of the ABC transporter complex PstSACB involved in phosphate import. Responsible for energy coupling to the transport system. The polypeptide is Phosphate import ATP-binding protein PstB 1 (Streptococcus pyogenes serotype M6 (strain ATCC BAA-946 / MGAS10394)).